An 875-amino-acid chain; its full sequence is ATP-dependent helicase Lhr-Core (875 aa).

8 residues coordinate ATP: Q35, K58, T59, D173, E174, I355, R372, and H375. One can recognise a Helicase ATP-binding domain in the interval 39–230 (IPLIKQNYNV…FLVGKDREYR (192 aa)). A DEIH box motif is present at residues 173–176 (DEIH). Residues 247–419 (PVKDLVHSSE…SIHIPKNPLD (173 aa)) enclose the Helicase C-terminal domain. Residues 420-506 (VLSQIIVSAS…IFYTNSGTIP (87 aa)) form a WH domain region. A domain 4 region spans residues 507–875 (DEAMISVVTE…VNIELEYTSV (369 aa)).

It belongs to the Lhr helicase family. Lhr-Core subfamily. Monomer and homodimer. The monomeric form has helicase, ATPase and strand annealing activities, while the dimeric form only has ATPAse and strand annealing activities. Interacts with DNA topoisomerase 3 (topA).

The catalysed reaction is Couples ATP hydrolysis with the unwinding of duplex DNA by translocating in the 3'-5' direction.. The enzyme catalyses ATP + H2O = ADP + phosphate + H(+). With respect to regulation, DNA topoisomerase 3 (topA) inhibits helicase activity on Holliday junctions (HJ) but has no effect on ATPase activity. In terms of biological role, DNA helicase that translocates in a 3'-5' direction on single-stranded (ss)DNA, probably involved in DNA repair. Unwinds DNA in a 3'-5' direction, unwinding is ATP-dependent, acts preferentially on fork and 3'-tailed DNA; bubble and blunt-ended double-stranded (ds)DNA are not substrates. Has winding and unwinding activity, unwinds Holliday junction (HJ) DNA in the presence of ATP, the main product is forked DNA, single-stranded binding protein (SSB) does not stimulate activity. Anneals complementary oligonucleotides in an ATP-independent manner to form HJ and fork structures, thus can perform strand exchange. Preferentially binds HJ, forked and ssDNA, dsDNA is bound less well. LhrC-Core (Hel112) inhibits the exonuclease activity of the HerA-NurA complex on ss- and dsDNA, has no effect on ssDNA nicking by NurA; HerA-NurA are involved in DNA end-resection during DNA double-strand break repair. This chain is ATP-dependent helicase Lhr-Core, found in Saccharolobus solfataricus (strain ATCC 35092 / DSM 1617 / JCM 11322 / P2) (Sulfolobus solfataricus).